Reading from the N-terminus, the 489-residue chain is Glutamyl-tRNA(Gln) amidotransferase subunit A (489 aa).

Active-site charge relay system residues include Lys79 and Ser158. The active-site Acyl-ester intermediate is the Ser182.

It belongs to the amidase family. GatA subfamily. In terms of assembly, heterotrimer of A, B and C subunits.

The enzyme catalyses L-glutamyl-tRNA(Gln) + L-glutamine + ATP + H2O = L-glutaminyl-tRNA(Gln) + L-glutamate + ADP + phosphate + H(+). Allows the formation of correctly charged Gln-tRNA(Gln) through the transamidation of misacylated Glu-tRNA(Gln) in organisms which lack glutaminyl-tRNA synthetase. The reaction takes place in the presence of glutamine and ATP through an activated gamma-phospho-Glu-tRNA(Gln). In Anaplasma marginale (strain Florida), this protein is Glutamyl-tRNA(Gln) amidotransferase subunit A.